The chain runs to 1451 residues: Protein clueless (1451 aa).

Disordered regions lie at residues 1 to 101 (MALE…EYAA) and 264 to 286 (KKTR…VSEP). The segment covering 9–53 (NSNATATGDATATKASSKAKENNNTAGGKKNLNPIPSQQNSNQNL) has biased composition (low complexity). A compositionally biased stretch (basic residues) spans 66-75 (GKKKGKKNRN). S270 is modified (phosphoserine). The Clu domain occupies 424 to 666 (RAEDAFSSKL…RTFPPDVNFL (243 aa)). Disordered regions lie at residues 722 to 775 (AKKQ…ESKT), 961 to 1012 (AVSS…SSVS), and 1413 to 1451 (ANNN…ATSS). Residues 748–758 (GADKTDVKEEK) are compositionally biased toward basic and acidic residues. A compositionally biased stretch (basic residues) spans 969–984 (KKRGNGGKHNKHKSSK). The segment covering 989-1010 (QQQQQTTGNQNGSSSGTSNGSS) has biased composition (low complexity).

Belongs to the CLU family.

It is found in the cytoplasm. Its function is as follows. mRNA-binding protein involved in proper cytoplasmic distribution of mitochondria. This chain is Protein clueless, found in Drosophila yakuba (Fruit fly).